We begin with the raw amino-acid sequence, 571 residues long: Peptide-N4-(N-acetyl-beta-glucosaminyl)asparagine amidase A (571 aa).

Residues asparagine 121, asparagine 143, asparagine 197, asparagine 241, asparagine 318, asparagine 367, asparagine 390, asparagine 423, asparagine 457, asparagine 481, asparagine 524, and asparagine 529 are each glycosylated (N-linked (GlcNAc...) asparagine).

In terms of assembly, heterodimer of a large and a small chain. In terms of processing, is highly glycosylated and is largly resistant against self-deglycosylation.

The enzyme catalyses Hydrolysis of an N(4)-(acetyl-beta-D-glucosaminyl)asparagine residue in which the glucosamine residue may be further glycosylated, to yield a (substituted) N-acetyl-beta-D-glucosaminylamine and a peptide containing an aspartate residue.. This is Peptide-N4-(N-acetyl-beta-glucosaminyl)asparagine amidase A from Prunus dulcis (Almond).